The chain runs to 486 residues: Nucleolar protein 56 (486 aa).

Residues 298 to 416 (CAPSLSALIG…VEDRLEYFTS (119 aa)) enclose the Nop domain. Residues 450–486 (KKAKRLAEESVTATAEAEVDEDAPKPKKKKKSKAGDE) are disordered. Basic residues predominate over residues 475 to 486 (PKKKKKSKAGDE).

The protein belongs to the NOP5/NOP56 family.

It localises to the nucleus. It is found in the nucleolus. Required for 60S ribosomal subunit synthesis. This chain is Nucleolar protein 56, found in Caenorhabditis elegans.